The chain runs to 70 residues: Envelope small membrane protein (70 aa).

G2 carries N-myristoyl glycine; by host lipidation. The segment at 2 to 15 (GSLWSKISQLFVDA) is endoplasmic reticulum retention signal. Residues 2–25 (GSLWSKISQLFVDAFTEFLVSVVD) lie on the Virion surface side of the membrane. The chain crosses the membrane as a helical span at residues 26 to 46 (IVIFLAILFGFTVAGWLLVFL). The Intravirion segment spans residues 47-70 (LRVVCSALLRSRSAIHSPELSKVL).

Belongs to the arteriviridae E protein family. In terms of assembly, homooligomer. Associates with itself into higher-order structures, including dimers, trimers and tetramers. Associates with the GP2b-GP3-GP4 complex. Myristoylated. In terms of processing, not glycosylated.

It localises to the virion membrane. Its subcellular location is the host endoplasmic reticulum membrane. The protein resides in the host Golgi apparatus membrane. It is found in the secreted. Functionally, minor envelope protein. May function as a viroporin in the virion envelope that facilitates uncoating of the virus in order to release the genomic RNA into the cytoplasm for subsequent replication. In Sus scrofa (Pig), this protein is Envelope small membrane protein (GP2b).